A 236-amino-acid polypeptide reads, in one-letter code: Protein CUSTOS (236 aa).

Disordered stretches follow at residues 1 to 57 (MSES…GTTP) and 83 to 236 (VEPA…KKDE). 2 stretches are compositionally biased toward basic and acidic residues: residues 10–51 (NTAR…HDGN) and 156–165 (EKTEEKSTKE). Positions 173–181 (KMKKKKKRK) match the Nucleolar localization signal (NLS1) motif. Positions 182–196 (TSSEESQDKVNHQTE) are enriched in basic and acidic residues. Over residues 197–210 (KQSNVEGNQEQTTA) the composition is skewed to polar residues. Positions 211 to 219 (GERLKKKKK) match the Nucleolar localization signal (NLS2) motif. The segment covering 214-227 (LKKKKKKKKKKRKK) has biased composition (basic residues).

Belongs to the CUSTOS family. Interacts (via NLS1 and NLS2) with dvl2; the interaction is negatively regulated by Wnt stimulation. Interacts with csnk1a1. Interacts with ctnnb1; the interaction is positively regulated by Wnt stimulation. Phosphorylated by ck1/csnk1a1.

The protein resides in the nucleus envelope. Essential for Spemann-Mangold organizer formation and subsequent anterior head development in the embryo. Inhibits canonical Wnt signaling pathway by antagonizing nuclear import of beta-catenin (ctnnb1) during embryogenesis. In Danio rerio (Zebrafish), this protein is Protein CUSTOS.